The following is a 429-amino-acid chain: MAKIVDIKGREVLDSRGNPTVEADVLLDNGIIGSACAPSGASTGSREALELRDGDKSRYLGKGVLKAVANINGPIRDLLLGKDPIDQKALDQAMIKLDGTENKATLGANAILAVSLAAAKAAAQDQDLPLYAHIANLNGTPGVYSMPVPMMNIINGGEHADNNVDIQEFMVQPVGAKSFSEGLRMGTEIFHHLKAVLKARGLNTAVGDEGGFAPNLASNEDALKVISEAVANAGYTLGTDVTLALDCAASEFYEDGKYNLSGEGQVFTAEGFAEYLKGLTQRYPIISIEDGLDESDWAGWKILTDKIGEKVQLVGDDLFVTNTKILKEGIDKKIANSILIKFNQIGTLTETLEAIQMAKAAGYTAVISHRSGETEDSTIADLAVGTSAGQIKTGSLCRSDRVSKYNQLLRIEEQLNGKAKYNGRGEFRG.

A (2R)-2-phosphoglycerate-binding site is contributed by Gln167. Residue Glu209 is the Proton donor of the active site. Mg(2+) is bound by residues Asp246, Glu289, and Asp316. Residues Lys341, Arg370, Ser371, and Lys392 each coordinate (2R)-2-phosphoglycerate. The Proton acceptor role is filled by Lys341.

Belongs to the enolase family. In terms of assembly, component of the RNA degradosome, a multiprotein complex involved in RNA processing and mRNA degradation. The cofactor is Mg(2+).

It is found in the cytoplasm. The protein resides in the secreted. It localises to the cell surface. It catalyses the reaction (2R)-2-phosphoglycerate = phosphoenolpyruvate + H2O. The protein operates within carbohydrate degradation; glycolysis; pyruvate from D-glyceraldehyde 3-phosphate: step 4/5. Catalyzes the reversible conversion of 2-phosphoglycerate (2-PG) into phosphoenolpyruvate (PEP). It is essential for the degradation of carbohydrates via glycolysis. This is Enolase from Pseudomonas fluorescens (strain ATCC BAA-477 / NRRL B-23932 / Pf-5).